The following is a 66-amino-acid chain: uncharacterized protein (66 aa).

Transmembrane regions (helical) follow at residues 4-24 (ALFI…LLIF) and 38-58 (LLTP…ILVL).

The protein localises to the membrane. This is an uncharacterized protein from Saccharomyces cerevisiae (strain ATCC 204508 / S288c) (Baker's yeast).